A 269-amino-acid polypeptide reads, in one-letter code: Protein OPG079 (269 aa).

The protein belongs to the orthopoxvirus OPG079 family. In terms of assembly, homoomultimer (Potential). Interacts with the small subunit of ribonucleotide reductase.

It localises to the host cytoplasm. Its function is as follows. Plays an essential role in viral DNA replication. Binds to ssDNA with high affinity and localizes to cytoplasmic factories where nascent viral genomes accumulate. May disrupt loops, hairpins and other secondary structures present on ssDNA to reduce and eliminate pausing of viral DNA polymerase at specific sites during elongation. This chain is Protein OPG079 (OPG079), found in Cynomys gunnisoni (Gunnison's prairie dog).